Here is an 89-residue protein sequence, read N- to C-terminus: Small ribosomal subunit protein uS15 (89 aa).

The protein belongs to the universal ribosomal protein uS15 family. In terms of assembly, part of the 30S ribosomal subunit. Forms a bridge to the 50S subunit in the 70S ribosome, contacting the 23S rRNA.

Functionally, one of the primary rRNA binding proteins, it binds directly to 16S rRNA where it helps nucleate assembly of the platform of the 30S subunit by binding and bridging several RNA helices of the 16S rRNA. Forms an intersubunit bridge (bridge B4) with the 23S rRNA of the 50S subunit in the ribosome. The sequence is that of Small ribosomal subunit protein uS15 from Acidothermus cellulolyticus (strain ATCC 43068 / DSM 8971 / 11B).